Consider the following 335-residue polypeptide: Anthranilate phosphoribosyltransferase (335 aa).

Residues Gly79, 82-83 (GD), Thr87, 89-92 (NIST), 107-115 (KHGNRSASS), and Ala119 contribute to the 5-phospho-alpha-D-ribose 1-diphosphate site. Gly79 contacts anthranilate. Ser91 lines the Mg(2+) pocket. Residue Asn110 coordinates anthranilate. Arg165 is a binding site for anthranilate. Mg(2+)-binding residues include Asp224 and Glu225.

The protein belongs to the anthranilate phosphoribosyltransferase family. In terms of assembly, homodimer. Mg(2+) is required as a cofactor.

It carries out the reaction N-(5-phospho-beta-D-ribosyl)anthranilate + diphosphate = 5-phospho-alpha-D-ribose 1-diphosphate + anthranilate. Its pathway is amino-acid biosynthesis; L-tryptophan biosynthesis; L-tryptophan from chorismate: step 2/5. Catalyzes the transfer of the phosphoribosyl group of 5-phosphorylribose-1-pyrophosphate (PRPP) to anthranilate to yield N-(5'-phosphoribosyl)-anthranilate (PRA). The sequence is that of Anthranilate phosphoribosyltransferase from Methanobrevibacter smithii (strain ATCC 35061 / DSM 861 / OCM 144 / PS).